Consider the following 201-residue polypeptide: Small ribosomal subunit protein uS4 (201 aa).

The 61-residue stretch at 91–151 folds into the S4 RNA-binding domain; that stretch reads SRLDNVVYRA…EKSQKMNWFE (61 aa).

It belongs to the universal ribosomal protein uS4 family. Part of the 30S ribosomal subunit. Contacts protein S5. The interaction surface between S4 and S5 is involved in control of translational fidelity.

In terms of biological role, one of the primary rRNA binding proteins, it binds directly to 16S rRNA where it nucleates assembly of the body of the 30S subunit. Functionally, with S5 and S12 plays an important role in translational accuracy. This chain is Small ribosomal subunit protein uS4, found in Corynebacterium efficiens (strain DSM 44549 / YS-314 / AJ 12310 / JCM 11189 / NBRC 100395).